A 152-amino-acid chain; its full sequence is MSLVANEEFQHILRVLNTNVDGKQKIMFALTSIKGIGRRLANIVCKKADVDMNKRAGELSAAEIDNLMTIVANPRQFKIPDWFLNRQKDYKDGKYSQVVSNALDMKLRDDLERLKKIRNHRGLRHYWGLRVRGQHTKTTGRRGKTVGVSKKR.

Ser-2 carries the N-acetylserine modification.

The protein belongs to the universal ribosomal protein uS13 family.

It localises to the cytoplasm. Located at the top of the head of the 40S subunit, it contacts several helices of the 18S rRNA. The chain is Small ribosomal subunit protein uS13z/uS13y/uS13x (RPS18A) from Arabidopsis thaliana (Mouse-ear cress).